The sequence spans 1976 residues: MAQRTGLEDPERYLFVDRAVIYNPATQADWTAKKLVWIPSERHGFEAASIKEERGDEVMVELAENGKKAMVNKDDIQKMNPPKFSKVEDMAELTCLNEASVLHNLKDRYYSGLIYTYSGLFCVVINPYKNLPIYSENIIEMYRGKKRHEMPPHIYAISESAYRCMLQDREDQSILCTGESGAGKTENTKKVIQYLAHVASSHKGRKDHNIPGELERQLLQANPILESFGNAKTVKNDNSSRFGKFIRINFDVTGYIVGANIETYLLEKSRAVRQAKDERTFHIFYQLLSGAGEHLKSDLLLEGFNNYRFLSNGYIPIPGQQDKDNFQETMEAMHIMGFSHEEILSMLKVVSSVLQFGNISFKKERNTDQASMPENTVAQKLCHLLGMNVMEFTRAILTPRIKVGRDYVQKAQTKEQADFAVEALAKATYERLFRWLVHRINKALDRTKRQGASFIGILDIAGFEIFELNSFEQLCINYTNEKLQQLFNHTMFILEQEEYQREGIEWNFIDFGLDLQPCIDLIERPANPPGVLALLDEECWFPKATDKTFVEKLVQEQGSHSKFQKPRQLKDKADFCIIHYAGKVDYKADEWLMKNMDPLNDNVATLLHQSSDRFVAELWKDVDRIVGLDQVTGMTETAFGSAYKTKKGMFRTVGQLYKESLTKLMATLRNTNPNFVRCIIPNHEKRAGKLDPHLVLDQLRCNGVLEGIRICRQGFPNRIVFQEFRQRYEILTPNAIPKGFMDGKQACERMIRALELDPNLYRIGQSKIFFRAGVLAHLEEERDLKITDIIIFFQAVCRGYLARKAFAKKQQQLSALKVLQRNCAAYLKLRHWQWWRVFTKVKPLLQVTRQEEELQAKDEELLKVKEKQTKVEGELEEMERKHQQLLEEKNILAEQLQAETELFAEAEEMRARLAAKKQELEEILHDLESRVEEEEERNQILQNEKKKMQAHIQDLEEQLDEEEGARQKLQLEKVTAEAKIKKMEEEVLLLEDQNSKFIKEKKLMEDRIAECSSQLAEEEEKAKNLAKIRNKQEVMISDLEERLKKEEKTRQELEKAKRKLDGETTDLQDQIAELQAQVDELKVQLTKKEEELQGALARGDDETLHKNNALKVARELQAQIAELQEDFESEKASRNKAEKQKRDLSEELEALKTELEDTLDTTAAQQELRTKREQEVAELKKALEDETKNHEAQIQDMRQRHATALEELSEQLEQAKRFKANLEKNKQGLETDNKELACEVKVLQQVKAESEHKRKKLDAQVQELHAKVSEGDRLRVELAEKANKLQNELDNVSTLLEEAEKKGIKFAKDAAGLESQLQDTQELLQEETRQKLNLSSRIRQLEEEKNSLQEQQEEEEEARKNLEKQVLALQSQLADTKKKVDDDLGTIESLEEAKKKLLKDVEALSQRLEEKVLAYDKLEKTKNRLQQELDDLTVDLDHQRQIVSNLEKKQKKFDQLLAEEKGISARYAEERDRAEAEAREKETKALSLARALEEALEAKEEFERQNKQLRADMEDLMSSKDDVGKNVHELEKSKRALEQQVEEMRTQLEELEDELQATEDAKLRLEVNMQAMKAQFERDLQTRDEQNEEKKRLLLKQVRELEAELEDERKQRALAVASKKKMEIDLKDLEAQIEAANKARDEVIKQLRKLQAQMKDYQRELEEARASRDEIFAQSKESEKKLKSLEAEILQLQEELASSERARRHAEQERDELADEIANSASGKSALLDEKRRLEARIAQLEEELEEEQSNMELLNDRFRKTTLQVDTLNTELAAERSAAQKSDNARQQLERQNKELKAKLQELEGAVKSKFKATISALEAKIGQLEEQLEQEAKERAAANKLVRRTEKKLKEIFMQVEDERRHADQYKEQMEKANARMKQLKRQLEEAEEEATRANASRRKLQRELDDATEANEGLSREVSTLKNRLRRGGPISFSSSRSGRRQLHIEGASLELSDDDTESKTSDVNDTQPPQSE.

Residue R18 is modified to Omega-N-methylarginine. The 51-residue stretch at 31–81 (TAKKLVWIPSERHGFEAASIKEERGDEVMVELAENGKKAMVNKDDIQKMNP) folds into the Myosin N-terminal SH3-like domain. The Myosin motor domain maps to 85-783 (SKVEDMAELT…VLAHLEEERD (699 aa)). Residue 178–185 (GESGAGKT) coordinates ATP. Position 442 is an N6-acetyllysine (K442). Residues 661 to 683 (LTKLMATLRNTNPNFVRCIIPNH) form an actin-binding region. The 30-residue stretch at 786–815 (ITDIIIFFQAVCRGYLARKAFAKKQQQLSA) folds into the IQ domain. The stretch at 845–1976 (LQVTRQEEEL…VNDTQPPQSE (1132 aa)) forms a coiled coil. The segment at 1125–1175 (EDFESEKASRNKAEKQKRDLSEELEALKTELEDTLDTTAAQQELRTKREQE) is disordered. Residues 1129–1155 (SEKASRNKAEKQKRDLSEELEALKTEL) are compositionally biased toward basic and acidic residues. Phosphoserine is present on S1145. Residues K1241, K1301, and K1645 each carry the N6-acetyllysine modification. Disordered regions lie at residues 1697 to 1718 (ASSE…DEIA) and 1874 to 1976 (KANA…PQSE). Residues 1698–1708 (SSERARRHAEQ) show a composition bias toward basic and acidic residues. R1930 bears the Omega-N-methylarginine mark. Phosphoserine occurs at positions 1935, 1937, 1938, and 1939. Position 1940 is an omega-N-methylarginine (R1940). Phosphoserine occurs at positions 1952 and 1956. Phosphothreonine is present on T1960. The segment covering 1967 to 1976 (VNDTQPPQSE) has biased composition (polar residues). A Phosphoserine modification is found at S1975.

This sequence belongs to the TRAFAC class myosin-kinesin ATPase superfamily. Myosin family. As to quaternary structure, myosin is a hexameric protein that consists of 2 heavy chain subunits (MHC), 2 alkali light chain subunits (MLC) and 2 regulatory light chain subunits (MLC-2). Interacts with PLEKHG6. Interacts with ECPAS. Interacts with LARP6. Interacts with MCC. Interacts with KIF26B. Interacts with CFAP95. In terms of processing, phosphorylated by ABL2. In terms of tissue distribution, in newborn kidney, expressed in the mesenchyme and ureteric buds.

It is found in the cell projection. It localises to the lamellipodium. Functionally, involved with LARP6 in the stabilization of type I collagen mRNAs for CO1A1 and CO1A2. During cell spreading, plays an important role in cytoskeleton reorganization, focal contacts formation (in the central part but not the margins of spreading cells), and lamellipodial extension; this function is mechanically antagonized by MYH9. Cellular myosin that appears to play a role in cytokinesis, cell shape, and specialized functions such as secretion and capping. This Mus musculus (Mouse) protein is Myosin-10 (Myh10).